Here is an 880-residue protein sequence, read N- to C-terminus: Valine--tRNA ligase (880 aa).

Positions 51-61 (PNVTGELHLGH) match the 'HIGH' region motif. Residues 529-533 (KMSKT) carry the 'KMSKS' region motif. ATP is bound at residue Lys-532. The stretch at 815–854 (MSTMVDLEVEAKRVKAEISELEIQIERLSTRLSDEQFLAK) forms a coiled coil.

This sequence belongs to the class-I aminoacyl-tRNA synthetase family. ValS type 1 subfamily. Monomer.

The protein resides in the cytoplasm. The catalysed reaction is tRNA(Val) + L-valine + ATP = L-valyl-tRNA(Val) + AMP + diphosphate. Its function is as follows. Catalyzes the attachment of valine to tRNA(Val). As ValRS can inadvertently accommodate and process structurally similar amino acids such as threonine, to avoid such errors, it has a 'posttransfer' editing activity that hydrolyzes mischarged Thr-tRNA(Val) in a tRNA-dependent manner. This Dehalococcoides mccartyi (strain CBDB1) protein is Valine--tRNA ligase.